Reading from the N-terminus, the 309-residue chain is MNGTYNTCGSSDLTWPPAIKLGFYAYLGVLLVLGLLLNSLALWVFCCRMQQWTETRIYMTNLAVADLCLLCTLPFVLHSLRDTSDTPLCQLSQGIYLTNRYMSISLVTAIAVDRYVAVRHPLRARGLRSPRQAAAVCAVLWVLVIGSLVARWLLGIQEGGFCFRSTRHNFNSMAFPLLGFYLPLAVVVFCSLKVVTALAQRPPTDVGQAEATRKAARMVWANLLVFVVCFLPLHVGLTVRLAVGWNACALLETIRRALYITSKLSDANCCLDAICYYYMAKEFQEASALAVAPSAKAHKSQDSLCVTLA.

The Extracellular portion of the chain corresponds to 1-24 (MNGTYNTCGSSDLTWPPAIKLGFY). Asn-2 carries N-linked (GlcNAc...) asparagine glycosylation. The chain crosses the membrane as a helical span at residues 25-45 (AYLGVLLVLGLLLNSLALWVF). Topologically, residues 46-56 (CCRMQQWTETR) are cytoplasmic. Residues 57 to 77 (IYMTNLAVADLCLLCTLPFVL) form a helical membrane-spanning segment. Over 78 to 90 (HSLRDTSDTPLCQ) the chain is Extracellular. A disulfide bond links Cys-89 and Cys-162. Residues 91 to 112 (LSQGIYLTNRYMSISLVTAIAV) form a helical membrane-spanning segment. Topologically, residues 113–135 (DRYVAVRHPLRARGLRSPRQAAA) are cytoplasmic. Residues 136–156 (VCAVLWVLVIGSLVARWLLGI) traverse the membrane as a helical segment. Topologically, residues 157–174 (QEGGFCFRSTRHNFNSMA) are extracellular. A helical transmembrane segment spans residues 175–195 (FPLLGFYLPLAVVVFCSLKVV). Topologically, residues 196-218 (TALAQRPPTDVGQAEATRKAARM) are cytoplasmic. Residues 219 to 239 (VWANLLVFVVCFLPLHVGLTV) traverse the membrane as a helical segment. Over 240 to 258 (RLAVGWNACALLETIRRAL) the chain is Extracellular. The helical transmembrane segment at 259 to 279 (YITSKLSDANCCLDAICYYYM) threads the bilayer. Residues 280–309 (AKEFQEASALAVAPSAKAHKSQDSLCVTLA) lie on the Cytoplasmic side of the membrane. 2 positions are modified to phosphoserine: Ser-287 and Ser-294. 2 positions are modified to phosphoserine; by GRK5 and GRK6: Ser-300 and Ser-303. The residue at position 307 (Thr-307) is a Phosphothreonine.

It belongs to the G-protein coupled receptor 1 family. Interacts with GNA13. Interacts with ARRB2. In terms of processing, multiply phosphorylated in clusters of serines and threonines in the C-terminal tail. Phosphorylation of Ser-300 and Ser-303 is mediated by GRK5 and/or GRK6. In terms of tissue distribution, predominantly expressed in immune and gastrointestinal tissues.

The protein localises to the cell membrane. Functionally, G-protein coupled receptor that binds to several ligands including the tryptophan metabolite kynurenic acid (KYNA), lysophosphatidic acid (LPA) or 5-hydroxyindoleacetic acid (5-HIAA) with high affinity, leading to rapid and transient activation of numerous intracellular signaling pathways. Plays a role in neutrophil recruitment to sites of inflammation and bacterial clearance through the major serotonin metabolite 5-HIAA that acts as a physiological ligand. Stimulates lipid metabolism, thermogenic, and anti-inflammatory gene expression in adipose tissue once activated by kynurenic acid. In macrophages, activation by lysophosphatidic acid promotes GPR35-induced signaling with a distinct transcriptional profile characterized by TNF production associated with ERK and NF-kappa-B activation. In turn, induces chemotaxis of macrophages. In Homo sapiens (Human), this protein is G-protein coupled receptor 35 (GPR35).